Reading from the N-terminus, the 273-residue chain is MRDKLFYFLSKYNFSPRDKIGQNFLIMRDVIIKAVETSEIKKSDVVLEVGPGFGFLTDELSKRAGKVYAIELDKRIIEILENEYNWENVEIIQGDAVKIEWPEFNKVVSNIPYQISSPFTFKLLKHDFEKAVVMYQLEFAKRMVAKPGDRNYSRLSLMVNALANAKIVMKIGRGAFYPKPKVDSALVLIVPKPKDERIELNENLVKALFQHRRKLVSKALKESCHMLGINKKELKTLKNILENVPHAKKRVFELTPEEVKEIEEFLKIQGIIN.

Residues N23, L25, G50, E71, D95, and N110 each contribute to the S-adenosyl-L-methionine site.

This sequence belongs to the class I-like SAM-binding methyltransferase superfamily. rRNA adenine N(6)-methyltransferase family. RsmA subfamily.

It localises to the cytoplasm. Specifically dimethylates two adjacent adenosines in the loop of a conserved hairpin near the 3'-end of 16S rRNA in the 30S particle. May play a critical role in biogenesis of 30S subunits. This chain is Probable ribosomal RNA small subunit methyltransferase A, found in Pyrococcus furiosus (strain ATCC 43587 / DSM 3638 / JCM 8422 / Vc1).